Here is a 164-residue protein sequence, read N- to C-terminus: Ribosome-binding factor A (164 aa).

This sequence belongs to the RbfA family. Monomer. Binds 30S ribosomal subunits, but not 50S ribosomal subunits or 70S ribosomes.

The protein resides in the cytoplasm. Functionally, one of several proteins that assist in the late maturation steps of the functional core of the 30S ribosomal subunit. Associates with free 30S ribosomal subunits (but not with 30S subunits that are part of 70S ribosomes or polysomes). Required for efficient processing of 16S rRNA. May interact with the 5'-terminal helix region of 16S rRNA. This is Ribosome-binding factor A from Caulobacter sp. (strain K31).